A 298-amino-acid polypeptide reads, in one-letter code: Homoserine kinase (298 aa).

83–93 (PISRGLGSSSS) provides a ligand contact to ATP.

Belongs to the GHMP kinase family. Homoserine kinase subfamily.

The protein localises to the cytoplasm. The enzyme catalyses L-homoserine + ATP = O-phospho-L-homoserine + ADP + H(+). It participates in amino-acid biosynthesis; L-threonine biosynthesis; L-threonine from L-aspartate: step 4/5. Its function is as follows. Catalyzes the ATP-dependent phosphorylation of L-homoserine to L-homoserine phosphate. This is Homoserine kinase from Clostridium botulinum (strain Alaska E43 / Type E3).